We begin with the raw amino-acid sequence, 216 residues long: Superoxide dismutase [Cu-Zn] 2, chloroplastic (216 aa).

The transit peptide at M1–S62 directs the protein to the chloroplast. Positions 108, 110, and 125 each coordinate Cu cation. C119 and C208 are joined by a disulfide. Residues H125, H133, H142, and D145 each coordinate Zn(2+). H182 contacts Cu cation.

Belongs to the Cu-Zn superoxide dismutase family. Homotetramer. Cu cation is required as a cofactor. Zn(2+) serves as cofactor. Expressed in leaves (at protein level). The spatial localization is regulated by miR398-mediated silencing. Mostly present in flowers, old rosette leaves and inflorescence, and, to a lower extent, in cauline leaves, stems and roots.

It localises to the plastid. Its subcellular location is the chloroplast. It catalyses the reaction 2 superoxide + 2 H(+) = H2O2 + O2. Functionally, destroys radicals which are normally produced within the cells and which are toxic to biological systems. Mediates tolerance to stress, including photo-oxidative stress. The sequence is that of Superoxide dismutase [Cu-Zn] 2, chloroplastic (CSD2) from Arabidopsis thaliana (Mouse-ear cress).